Reading from the N-terminus, the 103-residue chain is Small ribosomal subunit protein uS10 (103 aa).

This sequence belongs to the universal ribosomal protein uS10 family. In terms of assembly, part of the 30S ribosomal subunit.

Functionally, involved in the binding of tRNA to the ribosomes. The protein is Small ribosomal subunit protein uS10 of Acinetobacter baumannii (strain AB307-0294).